We begin with the raw amino-acid sequence, 287 residues long: RxLR effector protein Avr4 (287 aa).

The signal sequence occupies residues 1–24 (MRSLHILLVFTASLLASLTESAKA). Positions 42 to 55 (RFLRAQTDEKNEER) match the RxLR-dEER motif. A W1 motif region spans residues 115-138 (KYERMQWQKLKEGETLTFMRLGDR). The interval 148 to 171 (QLLRWVAQKKPVESVYDDLQVAGF) is W2 motif. The segment at 221 to 244 (LFEKWAMEGTHIKSVITTLKLNGK) is W3 motif. Residues 246-267 (ASEMANNENFPALLKYVKLYLD) form a y motif region.

Belongs to the RxLR effector family.

The protein resides in the secreted. The protein localises to the host cytoplasm. Its subcellular location is the host nucleus. It is found in the host nucleolus. It localises to the host cytoskeleton. Secreted effector that acts as an elicitor of hypersensitive response (HR) specifically on plants carrying defense protein R4, through its interaction with this protein. The protein is RxLR effector protein Avr4 of Phytophthora infestans (strain T30-4) (Potato late blight agent).